A 152-amino-acid chain; its full sequence is uncharacterized protein (152 aa).

One can recognise an HTH marR-type domain in the interval 3-143; sequence EQKLCQAINL…IIEIFTILKS (141 aa). A DNA-binding region (H-T-H motif) is located at residues 55-78; it reads PGSLAMYQNVHKSAISNRLKKLLE.

This is an uncharacterized protein from Bacillus subtilis (strain 168).